A 110-amino-acid chain; its full sequence is uncharacterized protein (110 aa).

The segment at 85 to 110 is disordered; the sequence is ARKAERPSQGGKDYNGTAKSAQSTTV. The segment covering 101–110 has biased composition (polar residues); sequence TAKSAQSTTV.

This is an uncharacterized protein from Saccharomyces cerevisiae (strain ATCC 204508 / S288c) (Baker's yeast).